Consider the following 137-residue polypeptide: Small ribosomal subunit protein uS12 (137 aa).

The segment at 1 to 57 (MPTINQLVRKPRQSKSKKSDSPVLNRGFNSKKKQFTNLNSPQKRGVCTRVGTMTPRK) is disordered. A 3-methylthioaspartic acid modification is found at D102. The interval 118 to 137 (SGVDGRRQGRSLYGTKKPKN) is disordered.

It belongs to the universal ribosomal protein uS12 family. Part of the 30S ribosomal subunit. Contacts proteins S8 and S17. May interact with IF1 in the 30S initiation complex.

Functionally, with S4 and S5 plays an important role in translational accuracy. In terms of biological role, interacts with and stabilizes bases of the 16S rRNA that are involved in tRNA selection in the A site and with the mRNA backbone. Located at the interface of the 30S and 50S subunits, it traverses the body of the 30S subunit contacting proteins on the other side and probably holding the rRNA structure together. The combined cluster of proteins S8, S12 and S17 appears to hold together the shoulder and platform of the 30S subunit. The sequence is that of Small ribosomal subunit protein uS12 from Staphylococcus haemolyticus (strain JCSC1435).